The sequence spans 371 residues: DNA replication and repair protein RecF (371 aa).

30 to 37 (GENAQGKT) serves as a coordination point for ATP.

The protein belongs to the RecF family.

It is found in the cytoplasm. Functionally, the RecF protein is involved in DNA metabolism; it is required for DNA replication and normal SOS inducibility. RecF binds preferentially to single-stranded, linear DNA. It also seems to bind ATP. The protein is DNA replication and repair protein RecF of Staphylococcus haemolyticus (strain JCSC1435).